We begin with the raw amino-acid sequence, 317 residues long: Melanocyte-stimulating hormone receptor (317 aa).

The Extracellular portion of the chain corresponds to methionine 1–glutamate 37. A glycan (N-linked (GlcNAc...) asparagine) is linked at asparagine 29. A helical transmembrane segment spans residues valine 38–isoleucine 63. Residues alanine 64–proline 72 lie on the Cytoplasmic side of the membrane. Residues methionine 73–leucine 93 traverse the membrane as a helical segment. Residues glutamate 94–asparagine 118 are Extracellular-facing. The chain crosses the membrane as a helical span at residues valine 119 to valine 140. Residues aspartate 141 to arginine 163 are Cytoplasmic-facing. Residues isoleucine 164 to tyrosine 183 form a helical membrane-spanning segment. At asparagine 184 to cysteine 191 the chain is on the extracellular side. A helical transmembrane segment spans residues leucine 192–leucine 211. The Cytoplasmic segment spans residues alanine 212–alanine 240. Residues alanine 241–leucine 266 traverse the membrane as a helical segment. Residues cysteine 267 to asparagine 279 lie on the Extracellular side of the membrane. The helical transmembrane segment at phenylalanine 280–phenylalanine 300 threads the bilayer. The Cytoplasmic portion of the chain corresponds to arginine 301–tryptophan 317. Cysteine 315 carries S-palmitoyl cysteine lipidation.

Belongs to the G-protein coupled receptor 1 family. Interacts with MGRN1, but does not undergo MGRN1-mediated ubiquitination; this interaction competes with GNAS-binding and thus inhibits agonist-induced cAMP production. Interacts with OPN3; the interaction results in a decrease in MC1R-mediated cAMP signaling and ultimately a decrease in melanin production in melanocytes.

It is found in the cell membrane. Functionally, receptor for MSH (alpha, beta and gamma) and ACTH. The activity of this receptor is mediated by G proteins which activate adenylate cyclase. Mediates melanogenesis, the production of eumelanin (black/brown) and phaeomelanin (red/yellow), via regulation of cAMP signaling in melanocytes. This chain is Melanocyte-stimulating hormone receptor (MC1R), found in Dama dama (Fallow deer).